The sequence spans 287 residues: Carbon monoxide dehydrogenase medium chain (287 aa).

Residues 1–177 enclose the FAD-binding PCMH-type domain; the sequence is MIPPRFEYHA…VEIRVPAFAQ (177 aa). Residues 32 to 36 and 111 to 115 each bind FAD; these read AGGHS and TIGGD.

Dimer of heterotrimers. Each heterotrimer consists of a large, a medium and a small subunit. It depends on FAD as a cofactor.

It carries out the reaction CO + a quinone + H2O = a quinol + CO2. In terms of biological role, catalyzes the oxidation of carbon monoxide to carbon dioxide. In Hydrogenophaga pseudoflava (Pseudomonas carboxydoflava), this protein is Carbon monoxide dehydrogenase medium chain (cutM).